We begin with the raw amino-acid sequence, 248 residues long: 2,3-bisphosphoglycerate-dependent phosphoglycerate mutase (248 aa).

Substrate is bound by residues 8 to 15 (RHGESQWN), 21 to 22 (TG), Arg-60, 87 to 90 (ERHY), Lys-98, 114 to 115 (RR), and 183 to 184 (GN). His-9 acts as the Tele-phosphohistidine intermediate in catalysis. The active-site Proton donor/acceptor is the Glu-87.

Belongs to the phosphoglycerate mutase family. BPG-dependent PGAM subfamily. As to quaternary structure, homodimer.

The catalysed reaction is (2R)-2-phosphoglycerate = (2R)-3-phosphoglycerate. It participates in carbohydrate degradation; glycolysis; pyruvate from D-glyceraldehyde 3-phosphate: step 3/5. Functionally, catalyzes the interconversion of 2-phosphoglycerate and 3-phosphoglycerate. The sequence is that of 2,3-bisphosphoglycerate-dependent phosphoglycerate mutase from Alteromonas mediterranea (strain DSM 17117 / CIP 110805 / LMG 28347 / Deep ecotype).